Consider the following 136-residue polypeptide: Succinate dehydrogenase 2 membrane subunit SdhC (136 aa).

A run of 3 helical transmembrane segments spans residues 32–52, 70–90, and 109–129; these read RISG…AAML, IVGL…LNGI, and LWII…VVGI. H85 provides a ligand contact to heme.

This sequence belongs to the cytochrome b560 family. Part of an enzyme complex containing four subunits: a flavoprotein (SdhA), an iron-sulfur protein (SdhB), plus two membrane-anchoring proteins (SdhC and SdhD). Requires heme as cofactor.

The protein resides in the cell membrane. Its function is as follows. Membrane-anchoring subunit of succinate dehydrogenase 2 (Sdh2). Sdh2 may catalyze the two-electron oxidation of succinate to fumarate with a corresponding reduction of quinone to quinol under low oxygen conditions, when the primary aerobic succinate dehydrogenase (Sdh1) is inhibited. Sdh2 seems to be the generator of the proton motive force (PMF) under hypoxia. This Mycobacterium tuberculosis (strain ATCC 25618 / H37Rv) protein is Succinate dehydrogenase 2 membrane subunit SdhC.